A 428-amino-acid polypeptide reads, in one-letter code: FAD-dependent monooxygenase kojA (428 aa).

Residues 52-60 (RLHKGPHYP) and 328-329 (SV) contribute to the FAD site.

Belongs to the aromatic-ring hydroxylase family. The cofactor is FAD.

Functionally, probable FAD-dependent monooxygenase; part of the gene cluster that mediates the biosynthesis of 5-hydroxy-2-hydroxymethyl-1,4-pyrone, also know as kojic acid, a by-product in the fermentation process of malting rice that acts as a chelation agent. Glucose might be converted to kojic acid by a combination of dehydrogenase and dehydratase reactions involving kojA and probably additional enzymes. This Aspergillus flavus (strain ATCC 200026 / FGSC A1120 / IAM 13836 / NRRL 3357 / JCM 12722 / SRRC 167) protein is FAD-dependent monooxygenase kojA.